Reading from the N-terminus, the 228-residue chain is Urease accessory protein UreF (228 aa).

Belongs to the UreF family. As to quaternary structure, ureD, UreF and UreG form a complex that acts as a GTP-hydrolysis-dependent molecular chaperone, activating the urease apoprotein by helping to assemble the nickel containing metallocenter of UreC. The UreE protein probably delivers the nickel.

It localises to the cytoplasm. In terms of biological role, required for maturation of urease via the functional incorporation of the urease nickel metallocenter. This Lachnoclostridium phytofermentans (strain ATCC 700394 / DSM 18823 / ISDg) (Clostridium phytofermentans) protein is Urease accessory protein UreF.